A 501-amino-acid polypeptide reads, in one-letter code: L-arabinose isomerase (501 aa).

Residues Glu306, Glu333, His350, and His450 each coordinate Mn(2+).

Belongs to the arabinose isomerase family. As to quaternary structure, homohexamer. Requires Mn(2+) as cofactor.

It carries out the reaction beta-L-arabinopyranose = L-ribulose. It functions in the pathway carbohydrate degradation; L-arabinose degradation via L-ribulose; D-xylulose 5-phosphate from L-arabinose (bacterial route): step 1/3. Its function is as follows. Catalyzes the conversion of L-arabinose to L-ribulose. The polypeptide is L-arabinose isomerase (Serratia proteamaculans (strain 568)).